Consider the following 215-residue polypeptide: Ribonuclease T (215 aa).

The Exonuclease domain occupies 20-194; the sequence is VVIDVETAGF…YDTLQTAKLF (175 aa). Mg(2+)-binding residues include Asp-23, Glu-25, His-181, and Asp-186. Residue His-181 is the Proton donor/acceptor of the active site.

It belongs to the RNase T family. As to quaternary structure, homodimer. Requires Mg(2+) as cofactor.

Trims short 3' overhangs of a variety of RNA species, leaving a one or two nucleotide 3' overhang. Responsible for the end-turnover of tRNA: specifically removes the terminal AMP residue from uncharged tRNA (tRNA-C-C-A). Also appears to be involved in tRNA biosynthesis. In Yersinia pestis, this protein is Ribonuclease T.